Reading from the N-terminus, the 110-residue chain is Large ribosomal subunit protein uL22 (110 aa).

This sequence belongs to the universal ribosomal protein uL22 family. Part of the 50S ribosomal subunit.

Its function is as follows. This protein binds specifically to 23S rRNA; its binding is stimulated by other ribosomal proteins, e.g. L4, L17, and L20. It is important during the early stages of 50S assembly. It makes multiple contacts with different domains of the 23S rRNA in the assembled 50S subunit and ribosome. The globular domain of the protein is located near the polypeptide exit tunnel on the outside of the subunit, while an extended beta-hairpin is found that lines the wall of the exit tunnel in the center of the 70S ribosome. This chain is Large ribosomal subunit protein uL22, found in Teredinibacter turnerae (strain ATCC 39867 / T7901).